The primary structure comprises 242 residues: MNPFAPSAPLGGCLSPVIVALDFPTDADTLEFVARLEPSQCRLKVGKELFTASGRKLVDQLVARGFDVFLDLKYHDIPNTVASACRVAADLGVWMVDMHASGGRRMMEAAREAVANCSVRPLLIGVTVLTSMTDEELAELGLPAAAVQVERLARLAQSSGLDGVVCSAQEAAALKNLLGASFKLVTPGIRLADSAADDQRRVMTPAAAMAAGSDYLVIGRPITKAADPLATLTAINAGLAAR.

Substrate is bound by residues aspartate 22, lysine 44, 71 to 80 (DLKYHDIPNT), threonine 130, arginine 190, glutamine 199, glycine 219, and arginine 220. Residue lysine 73 is the Proton donor of the active site.

This sequence belongs to the OMP decarboxylase family. Type 1 subfamily. Homodimer.

It catalyses the reaction orotidine 5'-phosphate + H(+) = UMP + CO2. It participates in pyrimidine metabolism; UMP biosynthesis via de novo pathway; UMP from orotate: step 2/2. Catalyzes the decarboxylation of orotidine 5'-monophosphate (OMP) to uridine 5'-monophosphate (UMP). This Laribacter hongkongensis (strain HLHK9) protein is Orotidine 5'-phosphate decarboxylase.